A 78-amino-acid chain; its full sequence is Acyl carrier protein (78 aa).

Residues 2 to 77 (SDTAERVKKI…DAVKFIDKAS (76 aa)) form the Carrier domain. At S37 the chain carries O-(pantetheine 4'-phosphoryl)serine.

This sequence belongs to the acyl carrier protein (ACP) family. 4'-phosphopantetheine is transferred from CoA to a specific serine of apo-ACP by AcpS. This modification is essential for activity because fatty acids are bound in thioester linkage to the sulfhydryl of the prosthetic group.

The protein localises to the cytoplasm. Its pathway is lipid metabolism; fatty acid biosynthesis. In terms of biological role, carrier of the growing fatty acid chain in fatty acid biosynthesis. The polypeptide is Acyl carrier protein (Brucella abortus (strain S19)).